The chain runs to 384 residues: Xylose repressor (384 aa).

The segment at residues 29–48 (RAKLSEMTGLNKSTVSSQVN) is a DNA-binding region (H-T-H motif).

The protein belongs to the ROK (NagC/XylR) family.

Transcriptional repressor of xylose-utilizing enzymes. In Bacillus spizizenii (strain ATCC 23059 / NRRL B-14472 / W23) (Bacillus subtilis subsp. spizizenii), this protein is Xylose repressor (xylR).